The primary structure comprises 859 residues: MTTTRSNIKKRRSLATLITKIIILVLAPIILGIFIQSYYFSKQIIWQEVDRTKQQTSALIHNIFDSHFAAIQIHHDSNSKSEVIRDFYTDRDTDVLNFFFLSIDQSDPSHTPEFRFLTDHKGIIWDDGNAHFYGVNDLILDSLANRVSFSNNWYYINVMTSIGSRHMLVRRVPILDPSTGEVLGFSFNAVVLDNNFALMEKLKSESNVDNVVLVANSVPLANSLIGDEPYNVADVLQRKSSDKRLDKLLVIETPIVVNAVTTELCLLTVQDNQSVVTLQIQHILAMLASIIGMIMIALMSREWIESKVSAQLESLMSYTRSAREEKGFERFGGSDIEEFDHIGSTLESTFEELEAQKKSFRDLFNFALSPIMVWSEESVLIQMNPAARKELVIEDDHEIMHPVFQGFKEKLTPHLKMAAQGATLTGVNVPIGNKIYRWNLSPIRVDGDISGIIVQGQDITTLIEAEKQSNIARREAEKSAQARADFLAKMSHEIRTPINGILGVAQLLKDSVDTQEQKNQIDVLCHSGEHLLAVLNDILDFSKIEQGKFNIQKHPFSFTDTMRTLENIYRPICTNKGVELVIENELDPNVEIFTDQVRLNQILFNLVSNAVKFTPIGSIRLHAELEQFYGAENSVLVVELTDTGIGIESDKLDQMFEPFVQEESTTTREYGGSGLGLTIVKNLVDMLEGDVQVRSSKGGGTTFVITLPVKDRERVLRPLEVSQRIKPEALFDESLKVLLVEDNHTNAFILQAFCKKYKMQVDWAKDGLDAMELLSDTTYDLILMDNQLPHLGGIETTHEIRQNLRLGTPIYACTADTAKETSDAFMAAGANYVMLKPIKENALHEAFVDFKQRFLVERT.

The next 2 helical transmembrane spans lie at 15–35 (ATLI…GIFI) and 280–300 (IQHI…ALMS). Residues 489 to 711 (KMSHEIRTPI…TFVITLPVKD (223 aa)) enclose the Histidine kinase domain. Histidine 492 bears the Phosphohistidine; by autocatalysis mark. Positions 736–851 (KVLLVEDNHT…ALHEAFVDFK (116 aa)) constitute a Response regulatory domain. Aspartate 785 carries the 4-aspartylphosphate modification.

As to quaternary structure, binds the complex formed by AI-2 and LuxP.

The protein localises to the cell inner membrane. It catalyses the reaction ATP + protein L-histidine = ADP + protein N-phospho-L-histidine.. Its function is as follows. At low cell density, in absence of AI-2 (autoinducer 2), LuxQ has a kinase activity and autophosphorylates on a histidine residue. The phosphoryl group is then transferred to an aspartate residue in the response regulator domain. The phosphoryl group is transferred to LuxU, and ultimately to LuxO. At high cell density, in the presence of AI-2, the kinase activity is inactivated, and the response regulator domain has a phosphatase activity. The sequence is that of Autoinducer 2 sensor kinase/phosphatase LuxQ (luxQ) from Vibrio harveyi (Beneckea harveyi).